The chain runs to 270 residues: Insulin-like growth factor-binding protein-like 1 (270 aa).

The signal sequence occupies residues 1–17; that stretch reads MPRLPLLLLLLPSLARG. An IGFBP N-terminal domain is found at 26–101; sequence RHPECSPCQQ…PEGTGLCVCA (76 aa). 7 disulfide bridges follow: Cys-30-Cys-55, Cys-33-Cys-57, Cys-38-Cys-58, Cys-44-Cys-61, Cys-69-Cys-83, Cys-77-Cys-98, and Cys-107-Cys-143. The 59-residue stretch at 87–145 folds into the Kazal-like domain; that stretch reads ASGTAPEGTGLCVCAQRGAVCGSDGRSYSSICALRLRARHAPRAHHGHLHKARDGPCEF. The Ig-like C2-type domain occupies 147–251; sequence PVVLMPPRDI…GEAQSHGTVT (105 aa). Asn-158 carries N-linked (GlcNAc...) asparagine glycosylation. Cys-168 and Cys-235 are oxidised to a cystine.

Its subcellular location is the secreted. IGF-binding proteins prolong the half-life of IGFs and have been shown to either inhibit or stimulate the growth promoting effects of the IGFs in cell culture. They alter the interaction of IGFs with their cell surface receptors. In Mus musculus (Mouse), this protein is Insulin-like growth factor-binding protein-like 1 (Igfbpl1).